An 896-amino-acid chain; its full sequence is DNA mismatch repair protein MutS (896 aa).

G638–S645 is an ATP binding site.

The protein belongs to the DNA mismatch repair MutS family.

Functionally, this protein is involved in the repair of mismatches in DNA. It is possible that it carries out the mismatch recognition step. This protein has a weak ATPase activity. The polypeptide is DNA mismatch repair protein MutS (Fusobacterium nucleatum subsp. nucleatum (strain ATCC 25586 / DSM 15643 / BCRC 10681 / CIP 101130 / JCM 8532 / KCTC 2640 / LMG 13131 / VPI 4355)).